The sequence spans 418 residues: CinA-like protein (418 aa).

It belongs to the CinA family.

This chain is CinA-like protein, found in Leptospira interrogans serogroup Icterohaemorrhagiae serovar Lai (strain 56601).